We begin with the raw amino-acid sequence, 169 residues long: Crossover junction endodeoxyribonuclease RuvC (169 aa).

Catalysis depends on residues Asp-11, Glu-71, and Asp-143. Positions 11, 71, and 143 each coordinate Mg(2+).

It belongs to the RuvC family. Homodimer which binds Holliday junction (HJ) DNA. The HJ becomes 2-fold symmetrical on binding to RuvC with unstacked arms; it has a different conformation from HJ DNA in complex with RuvA. In the full resolvosome a probable DNA-RuvA(4)-RuvB(12)-RuvC(2) complex forms which resolves the HJ. The cofactor is Mg(2+).

Its subcellular location is the cytoplasm. The catalysed reaction is Endonucleolytic cleavage at a junction such as a reciprocal single-stranded crossover between two homologous DNA duplexes (Holliday junction).. In terms of biological role, the RuvA-RuvB-RuvC complex processes Holliday junction (HJ) DNA during genetic recombination and DNA repair. Endonuclease that resolves HJ intermediates. Cleaves cruciform DNA by making single-stranded nicks across the HJ at symmetrical positions within the homologous arms, yielding a 5'-phosphate and a 3'-hydroxyl group; requires a central core of homology in the junction. The consensus cleavage sequence is 5'-(A/T)TT(C/G)-3'. Cleavage occurs on the 3'-side of the TT dinucleotide at the point of strand exchange. HJ branch migration catalyzed by RuvA-RuvB allows RuvC to scan DNA until it finds its consensus sequence, where it cleaves and resolves the cruciform DNA. This Bartonella henselae (strain ATCC 49882 / DSM 28221 / CCUG 30454 / Houston 1) (Rochalimaea henselae) protein is Crossover junction endodeoxyribonuclease RuvC.